The sequence spans 138 residues: MGPRRQKRKPETPRRRPASPAPAAPRPTPSLGTSSRPLARRRHTVLKEIRTLQKTTHLLLRKSPFCRLAREICVQFTRGVDFNWQAQALLALQEAAEAFLVHLFEDAYLLSLHAGRVTLFPKDVQLARRIRGIQEGLG.

The interval methionine 1–arginine 40 is disordered. Glycine 2 bears the N,N,N-trimethylglycine mark. Serine 19 carries the post-translational modification Phosphoserine. Residues serine 19–threonine 28 are compositionally biased toward pro residues. The segment at proline 37–leucine 52 is important for flexibility of DNA ends that protrude from nucleosomes. The interval alanine 39–glycine 138 is H3-like. The segment at cysteine 73–alanine 114 is CATD.

Belongs to the histone H3 family. Component of centromeric nucleosomes, where DNA is wrapped around a histone octamer core. The octamer contains two molecules each of H2A, H2B, CENPA and H4 assembled in one CENPA-H4 heterotetramer and two H2A-H2B heterodimers. CENPA modulates the DNA-binding characteristics of nucleosomes so that protruding DNA ends have higher flexibility than in nucleosomes containing conventional histone H3. Inhibits binding of histone H1 to nucleosomes, since histone H1 binds preferentially to rigid DNA linkers that protrude from nucleosomes. Nucleosomes containing CENPA also contain histone H2A variants such as MACROH2A and H2A.Z/H2AZ1. The CENPA-H4 heterotetramer is more compact and structurally more rigid than corresponding H3-H4 heterotetramers. Can assemble into nucleosomes that contain both CENPA and histone H3.3; these nucleosomes interact with a single CENPC chain. Heterotrimer composed of HJURP, CENPA and histone H4, where HJURP interacts with the dimer formed by CENPA and histone H4 and prevents tetramerization of CENPA and H4. Component of the CENPA-NAC complex, at least composed of CENPA, CENPC, CENPH, CENPM, CENPN, CENPT and CENPU. Interacts (via CATD domain) with HJURP; the interaction is direct and is required for its localization to centromeres. Interacts with CENPC, CENPN and CENPT; interaction is direct. Part of a centromere complex consisting of CENPA, CENPT and CENPW. Identified in centromere complexes containing histones H2A, H2B and H4, and at least CENPA, CENPB, CENPC, CENPT, CENPN, HJURP, SUPT16H, SSRP1 and RSF1. Can self-associate. The CENPA-H4 heterotetramer can bind DNA by itself (in vitro). Interacts with CDK1, PPP1CA and RBBP7. In terms of processing, trimethylated by NTMT1 at the N-terminal glycine after cleavage of Met-1. Methylation is low before incorporation into nucleosomes and increases with cell cycle progression, with the highest levels in mitotic nucleosomes. Poly-ADP-ribosylated by PARP1.

It is found in the nucleus. The protein resides in the chromosome. It localises to the centromere. Histone H3-like nucleosomal protein that is specifically found in centromeric nucleosomes. Replaces conventional H3 in the nucleosome core of centromeric chromatin that serves as an assembly site for the inner kinetochore. The presence of CENPA subtly modifies the nucleosome structure and the way DNA is wrapped around the nucleosome and gives rise to protruding DNA ends that are less well-ordered and rigid compared to nucleosomes containing histone H3. May serve as an epigenetic mark that propagates centromere identity through replication and cell division. Required for recruitment and assembly of kinetochore proteins, and as a consequence required for progress through mitosis, chromosome segregation and cytokinesis. The chain is Histone H3-like centromeric protein A (CENPA) from Bos taurus (Bovine).